The chain runs to 29 residues: Dermaseptin-1 (29 aa).

At valine 29 the chain carries Valine amide.

Expressed by the skin glands.

It localises to the secreted. Antimicrobial peptide, active against the Gram-positive bacterium S.aureus, the Gram-negative bacteria E.coli and P.aeruginosa, and the yeasts C.albicans and P.brasiliensis. Has hemolytic activity (40% hemolysis at 128 ug/ml). This is Dermaseptin-1 from Phyllomedusa tarsius (Brownbelly leaf frog).